The primary structure comprises 612 residues: Sulfite reductase [NADPH] flavoprotein alpha-component (612 aa).

The Flavodoxin-like domain maps to 64–202 (VTLISASQTG…QAQQWRQQVV (139 aa)). Residues 70–75 (SQTGNA), 117–120 (STQG), and 153–162 (LGDTSYEHFC) contribute to the FMN site. The FAD-binding FR-type domain maps to 247–461 (TAPLTAQLSV…IEHNDNFRLP (215 aa)). Residues threonine 335, lysine 369, 399-402 (RLYS), 417-419 (TVG), tyrosine 423, and 432-435 (GGAS) contribute to the FAD site. NADP(+) is bound by residues 532 to 533 (SR), 538 to 542 (KIYVQ), and aspartate 574. Residue tyrosine 612 coordinates FAD.

This sequence belongs to the NADPH-dependent sulphite reductase flavoprotein subunit CysJ family. It in the N-terminal section; belongs to the flavodoxin family. The protein in the C-terminal section; belongs to the flavoprotein pyridine nucleotide cytochrome reductase family. As to quaternary structure, alpha(8)-beta(8). The alpha component is a flavoprotein, the beta component is a hemoprotein. It depends on FAD as a cofactor. The cofactor is FMN.

It carries out the reaction hydrogen sulfide + 3 NADP(+) + 3 H2O = sulfite + 3 NADPH + 4 H(+). The protein operates within sulfur metabolism; hydrogen sulfide biosynthesis; hydrogen sulfide from sulfite (NADPH route): step 1/1. Component of the sulfite reductase complex that catalyzes the 6-electron reduction of sulfite to sulfide. This is one of several activities required for the biosynthesis of L-cysteine from sulfate. The flavoprotein component catalyzes the electron flow from NADPH -&gt; FAD -&gt; FMN to the hemoprotein component. The chain is Sulfite reductase [NADPH] flavoprotein alpha-component from Yersinia pestis bv. Antiqua (strain Nepal516).